The sequence spans 212 residues: MTQLADLRRNYMLSALSETDVAPDPIRQFQSWFDEAMQAKLPEPNAMTLATVGADGQPSARIVLLKGMDADGFTFFTNYESRKGVDLLANPRAALLFHWVQLERQIRVEGIVEKVEDAESDAYYASRPLGSRLGAWASEQSREVAGRDVIEAREADFRNKFGENPPRPPHWGGYRLKPTWIEFWQGRPSRLHDRIAYRQNADGNWQIVRLSP.

Residues 8–11 (RRNY) and Lys66 contribute to the substrate site. Residues 61–66 (RIVLLK), 76–77 (FT), Arg82, Lys83, and Gln105 contribute to the FMN site. Substrate-binding residues include Tyr123, Arg127, and Ser131. FMN-binding positions include 140–141 (QS) and Trp184. Residue 190–192 (RLH) coordinates substrate. Residue Arg194 coordinates FMN.

It belongs to the pyridoxamine 5'-phosphate oxidase family. As to quaternary structure, homodimer. Requires FMN as cofactor.

It carries out the reaction pyridoxamine 5'-phosphate + O2 + H2O = pyridoxal 5'-phosphate + H2O2 + NH4(+). It catalyses the reaction pyridoxine 5'-phosphate + O2 = pyridoxal 5'-phosphate + H2O2. It participates in cofactor metabolism; pyridoxal 5'-phosphate salvage; pyridoxal 5'-phosphate from pyridoxamine 5'-phosphate: step 1/1. Its pathway is cofactor metabolism; pyridoxal 5'-phosphate salvage; pyridoxal 5'-phosphate from pyridoxine 5'-phosphate: step 1/1. Functionally, catalyzes the oxidation of either pyridoxine 5'-phosphate (PNP) or pyridoxamine 5'-phosphate (PMP) into pyridoxal 5'-phosphate (PLP). The chain is Pyridoxine/pyridoxamine 5'-phosphate oxidase from Cupriavidus metallidurans (strain ATCC 43123 / DSM 2839 / NBRC 102507 / CH34) (Ralstonia metallidurans).